The sequence spans 264 residues: MQMWPPEPSIHFGNFSMEKLYEGKAKILYPTEDPDVLLTIFKDDATAFNAQKKGQIQGKGAINCAISAALFRWLETLGIPTHYIDCPQNDQMLVKAVNIIPLEVVVRNIAAGSLCKQTGLKEGLVLPNPLVEFYFKDDALGDPLLTWERALLLGVTDEARLQTLKDLALNINQHLQRFFAQCDITLVDFKLEFGGDRQGKIILADEISPDTCRLWDNAQADPQARVLDKDRFRRDLGSIEAAYQTVEKRVLSQIERLQSQMGAF.

Belongs to the SAICAR synthetase family.

It carries out the reaction 5-amino-1-(5-phospho-D-ribosyl)imidazole-4-carboxylate + L-aspartate + ATP = (2S)-2-[5-amino-1-(5-phospho-beta-D-ribosyl)imidazole-4-carboxamido]succinate + ADP + phosphate + 2 H(+). It participates in purine metabolism; IMP biosynthesis via de novo pathway; 5-amino-1-(5-phospho-D-ribosyl)imidazole-4-carboxamide from 5-amino-1-(5-phospho-D-ribosyl)imidazole-4-carboxylate: step 1/2. The polypeptide is Phosphoribosylaminoimidazole-succinocarboxamide synthase (purC) (Synechocystis sp. (strain ATCC 27184 / PCC 6803 / Kazusa)).